We begin with the raw amino-acid sequence, 348 residues long: Benzoate 1,2-dioxygenase electron transfer component (348 aa).

In terms of domain architecture, 2Fe-2S ferredoxin-type spans 14 to 109 (HQVALQFEDG…DAVFQIQASS (96 aa)). Cys51, Cys56, Cys59, and Cys93 together coordinate [2Fe-2S] cluster. The tract at residues 111 to 348 (VCKTKIHHFE…NFLFEKFSAN (238 aa)) is ferredoxin-reductase. One can recognise an FAD-binding FR-type domain in the interval 116-217 (IHHFEGTLAR…TGPFGSFYLR (102 aa)).

Belongs to the bacterial ring-hydroxylating dioxygenase ferredoxin reductase family. In terms of assembly, this dioxygenase system consists of three proteins: the two subunits of the hydroxylase component (BenA and BenB), and an electron transfer component (BenC). It depends on FAD as a cofactor. The cofactor is [2Fe-2S] cluster.

The enzyme catalyses 2 reduced [2Fe-2S]-[ferredoxin] + NAD(+) + H(+) = 2 oxidized [2Fe-2S]-[ferredoxin] + NADH. The protein operates within xenobiotic degradation; toluene degradation. In terms of biological role, electron transfer component of benzoate 1,2-dioxygenase system. The protein is Benzoate 1,2-dioxygenase electron transfer component (benC) of Acinetobacter baylyi (strain ATCC 33305 / BD413 / ADP1).